The following is a 76-amino-acid chain: Sec-independent protein translocase protein TatA (76 aa).

The helical transmembrane segment at 1–21 (MGSFSIWHWLIVLVIVALVFG) threads the bilayer. Basic and acidic residues-rich tracts occupy residues 39 to 50 (FKDGMKGEDDKP) and 64 to 76 (GTVD…KSNS). The interval 39 to 76 (FKDGMKGEDDKPAAQNAAPSQVADKGTVDVEVKEKSNS) is disordered.

Belongs to the TatA/E family. In terms of assembly, the Tat system comprises two distinct complexes: a TatABC complex, containing multiple copies of TatA, TatB and TatC subunits, and a separate TatA complex, containing only TatA subunits. Substrates initially bind to the TatABC complex, which probably triggers association of the separate TatA complex to form the active translocon.

The protein localises to the cell inner membrane. Its function is as follows. Part of the twin-arginine translocation (Tat) system that transports large folded proteins containing a characteristic twin-arginine motif in their signal peptide across membranes. TatA could form the protein-conducting channel of the Tat system. The sequence is that of Sec-independent protein translocase protein TatA from Herminiimonas arsenicoxydans.